The following is a 512-amino-acid chain: Maturase K (512 aa).

This sequence belongs to the intron maturase 2 family. MatK subfamily.

It is found in the plastid. The protein resides in the chloroplast. Functionally, usually encoded in the trnK tRNA gene intron. Probably assists in splicing its own and other chloroplast group II introns. The polypeptide is Maturase K (Lilium regale (Regal lily)).